An 843-amino-acid chain; its full sequence is Major vault protein alpha (843 aa).

Ala2 bears the N-acetylalanine mark. 9 MVP repeats span residues 2-56 (ADLN…IPQR), 57-111 (NYCT…KVTA), 112-163 (LQVV…EEIK), 164-216 (ATII…EIVN), 217-272 (AYVL…GEVH), 273-324 (ITTL…IHNI), 325-376 (YVLT…KRES), 377-442 (IPLD…STRV), and 443-505 (VTYR…FLGP). The segment at 643 to 663 (QEAAARHEAERLEQGARGRLE) is disordered. Positions 646–663 (AARHEAERLEQGARGRLE) are enriched in basic and acidic residues.

In terms of assembly, the vault ribonucleoprotein particle is a huge (400 A x 670 A) cage structure of 12.9 MDa. It consists of a dimer of half-vaults, with each half-vault comprising 39 identical major vault protein (MVP) chains. Dictyostelium is one of the few organisms in which the major component is actually two proteins (alpha and beta).

Its subcellular location is the cytoplasm. It is found in the nucleus. In terms of biological role, unknown, though MVP-alpha is required for normal vault structure. In Dictyostelium discoideum (Social amoeba), this protein is Major vault protein alpha (mvpA).